Reading from the N-terminus, the 135-residue chain is MNRLQLLSKGLRLIHKMSEEALAGVPLVHISPEGIFKYVMINVIDGGDASKAVIRGFADCTWHADIFDREEEVFKKLGLRAECPGGGRIEHNPDKKYLKVYGYSQGFGKADHAQTKRILATKYPDYTIETSDEGY.

Lysine 37 lines the substrate pocket. The active-site Proton acceptor is the histidine 63. 104–106 serves as a coordination point for substrate; that stretch reads SQG.

It belongs to the janus family.

In terms of biological role, janA and janB regulate somatic sex differentiation. In Drosophila orena (Fruit fly), this protein is Sex-regulated protein janus-A (janA).